The sequence spans 210 residues: Adenylate kinase (210 aa).

10–15 (GSGKGT) provides a ligand contact to ATP. Residues 28-57 (SVGKVLRTVMESNTAEADVVKKFIKSGKLV) are NMP. Residues Arg-34, 55-57 (KLV), 83-86 (GYPR), and Gln-90 contribute to the AMP site. The LID stretch occupies residues 120 to 158 (GRISCTDCGTIYNKLYCMPKINGVCDICNSSSFQNRVDD). ATP is bound at residue Arg-121. Zn(2+) is bound by residues Cys-124 and Cys-127. 130–131 (IY) is a binding site for ATP. 2 residues coordinate Zn(2+): Cys-144 and Cys-147. Residues Arg-155 and Arg-166 each coordinate AMP. Residue Gln-194 coordinates ATP.

This sequence belongs to the adenylate kinase family. In terms of assembly, monomer.

It localises to the cytoplasm. It carries out the reaction AMP + ATP = 2 ADP. It functions in the pathway purine metabolism; AMP biosynthesis via salvage pathway; AMP from ADP: step 1/1. In terms of biological role, catalyzes the reversible transfer of the terminal phosphate group between ATP and AMP. Plays an important role in cellular energy homeostasis and in adenine nucleotide metabolism. The protein is Adenylate kinase of Orientia tsutsugamushi (strain Boryong) (Rickettsia tsutsugamushi).